We begin with the raw amino-acid sequence, 70 residues long: Large ribosomal subunit protein bL31 (70 aa).

4 residues coordinate Zn(2+): Cys16, Cys18, Cys37, and Cys40.

Belongs to the bacterial ribosomal protein bL31 family. Type A subfamily. As to quaternary structure, part of the 50S ribosomal subunit. Zn(2+) is required as a cofactor.

Binds the 23S rRNA. This is Large ribosomal subunit protein bL31 from Glaesserella parasuis serovar 5 (strain SH0165) (Haemophilus parasuis).